The following is a 400-amino-acid chain: Diphosphomevalonate decarboxylase (400 aa).

Ala2 bears the N-acetylalanine mark. Residues 23-26 and Arg78 contribute to the (R)-5-diphosphomevalonate site; that span reads YWGK. Ser96 is subject to Phosphoserine. Residues 156 to 161 and Thr212 each bind (R)-5-diphosphomevalonate; that span reads SGSACR.

This sequence belongs to the diphosphomevalonate decarboxylase family. Homodimer. In terms of tissue distribution, expressed in heart, skeletal muscle, lung, liver, brain, pancreas, kidney and placenta.

It is found in the cytoplasm. The catalysed reaction is (R)-5-diphosphomevalonate + ATP = isopentenyl diphosphate + ADP + phosphate + CO2. Its pathway is steroid biosynthesis; cholesterol biosynthesis. In terms of biological role, catalyzes the ATP dependent decarboxylation of (R)-5-diphosphomevalonate to form isopentenyl diphosphate (IPP). Functions in the mevalonate (MVA) pathway leading to isopentenyl diphosphate (IPP), a key precursor for the biosynthesis of isoprenoids and sterol synthesis. In Homo sapiens (Human), this protein is Diphosphomevalonate decarboxylase (MVD).